The chain runs to 1303 residues: Endoplasmic reticulum transmembrane helix translocase spfA (1303 aa).

The next 2 membrane-spanning stretches (helical) occupy residues 25–45 (LHAY…VYLS) and 57–77 (EWTF…WLMT). The segment at 158–191 (KPPVKVFQQAQGLTSKEEIDRIQHHYGDNTFDIP) is A-domain; part 1. 2 helical membrane-spanning segments follow: residues 201–221 (EHAV…WMLD) and 223–243 (YWYY…TVVW). Residues 256–408 (NIKPYDVWVY…LVRTMIYSTE (153 aa)) form an A-domain; part 2 region. Asparagine 287 carries N-linked (GlcNAc...) asparagine glycosylation. The chain crosses the membrane as a helical span at residues 415–435 (VEALLFILFLLIFAIAAAWYV). N-linked (GlcNAc...) asparagine glycosylation is present at asparagine 474. A P-domain; part 1 region spans residues 484-513 (AIFCTEPFRIPFAGRVDVACFDKTGTLTGE). Aspartate 505 (4-aspartylphosphate intermediate) is an active-site residue. 2 residues coordinate Mg(2+): aspartate 505 and threonine 507. 505 to 507 (DKT) contributes to the ATP binding site. The interval 515 to 721 (LVVDGIAGLT…FAGFLVLQCP (207 aa)) is N-domain. The N-linked (GlcNAc...) asparagine glycan is linked to asparagine 589. ATP-binding residues include phenylalanine 616 and arginine 678. Positions 724-883 (EDAIKAVRML…HVGVALLNGS (160 aa)) are P-domain; part 2. An N-linked (GlcNAc...) asparagine glycan is attached at asparagine 734. ATP contacts are provided by residues aspartate 746 and 862–866 (DGTND). Mg(2+) is bound at residue aspartate 862. The arm-like stretch occupies residues 884-1019 (PEDLAKIAEH…ELDDSEPPTI (136 aa)). The N-linked (GlcNAc...) asparagine glycan is linked to asparagine 958. Positions 1020 to 1035 (KLGDASVAAPFTSKLA) are P-domain; part 3. The next 5 membrane-spanning stretches (helical) occupy residues 1060–1080 (ILAL…LDGI), 1082–1102 (FGDG…LSIS), 1122–1142 (VYII…LIYL), 1201–1221 (AMYW…TEFI), and 1239–1259 (VTLT…ENVL). Positions 1277-1303 (DQLQREMERKKQEELETQAEKERQRKV) are disordered.

Belongs to the cation transport ATPase (P-type) (TC 3.A.3) family. Type V subfamily. It depends on Mg(2+) as a cofactor.

The protein localises to the endoplasmic reticulum membrane. The enzyme catalyses [protein]-with a C-terminal TM segment(out) + ATP + H2O = [protein]-with a C-terminal TM segment(in) + ADP + phosphate + H(+). The ATPase activity is stimulated by phosphatidylinositol 4-phosphate (PI4P). In terms of biological role, endoplasmic reticulum (ER) translocase required to remove mitochondrial transmembrane proteins mistargeted to the endoplasmic reticulum. Acts as a dislocase that mediates the ATP-dependent extraction of mislocalized mitochondrial transmembrane proteins from the endoplasmic reticulum membrane. Works in concert with the ER Ca(2+) pump srcA to support ER homeostasis. With srcA, also supports redox homeostasis and virulence. The chain is Endoplasmic reticulum transmembrane helix translocase spfA from Aspergillus fumigatus (strain ATCC MYA-4609 / CBS 101355 / FGSC A1100 / Af293) (Neosartorya fumigata).